We begin with the raw amino-acid sequence, 140 residues long: Small ribosomal subunit protein uS12 (140 aa).

Asp-102 carries the post-translational modification 3-methylthioaspartic acid.

Belongs to the universal ribosomal protein uS12 family. As to quaternary structure, part of the 30S ribosomal subunit. Contacts proteins S8 and S17. May interact with IF1 in the 30S initiation complex.

With S4 and S5 plays an important role in translational accuracy. Its function is as follows. Interacts with and stabilizes bases of the 16S rRNA that are involved in tRNA selection in the A site and with the mRNA backbone. Located at the interface of the 30S and 50S subunits, it traverses the body of the 30S subunit contacting proteins on the other side and probably holding the rRNA structure together. The combined cluster of proteins S8, S12 and S17 appears to hold together the shoulder and platform of the 30S subunit. This is Small ribosomal subunit protein uS12 from Geobacillus stearothermophilus (Bacillus stearothermophilus).